The following is a 222-amino-acid chain: Protein-L-isoaspartate O-methyltransferase (222 aa).

Residue Ser-70 is part of the active site.

This sequence belongs to the methyltransferase superfamily. L-isoaspartyl/D-aspartyl protein methyltransferase family.

The protein localises to the cytoplasm. The catalysed reaction is [protein]-L-isoaspartate + S-adenosyl-L-methionine = [protein]-L-isoaspartate alpha-methyl ester + S-adenosyl-L-homocysteine. Catalyzes the methyl esterification of L-isoaspartyl residues in peptides and proteins that result from spontaneous decomposition of normal L-aspartyl and L-asparaginyl residues. It plays a role in the repair and/or degradation of damaged proteins. This Jannaschia sp. (strain CCS1) protein is Protein-L-isoaspartate O-methyltransferase.